The sequence spans 368 residues: Glutamate 5-kinase (368 aa).

Lysine 13 serves as a coordination point for ATP. 3 residues coordinate substrate: serine 54, aspartate 141, and asparagine 153. Position 173-174 (173-174) interacts with ATP; that stretch reads SD. A PUA domain is found at 278–355; it reads KGSLRLDAGA…DEIPEILGYP (78 aa).

The protein belongs to the glutamate 5-kinase family.

Its subcellular location is the cytoplasm. It catalyses the reaction L-glutamate + ATP = L-glutamyl 5-phosphate + ADP. It functions in the pathway amino-acid biosynthesis; L-proline biosynthesis; L-glutamate 5-semialdehyde from L-glutamate: step 1/2. In terms of biological role, catalyzes the transfer of a phosphate group to glutamate to form L-glutamate 5-phosphate. This chain is Glutamate 5-kinase, found in Jannaschia sp. (strain CCS1).